A 256-amino-acid chain; its full sequence is Thiazole synthase (256 aa).

Residue Lys95 is the Schiff-base intermediate with DXP of the active site. 1-deoxy-D-xylulose 5-phosphate contacts are provided by residues Gly156, 182 to 183 (AG), and 204 to 205 (NT).

It belongs to the ThiG family. Homotetramer. Forms heterodimers with either ThiH or ThiS.

The protein localises to the cytoplasm. It carries out the reaction [ThiS sulfur-carrier protein]-C-terminal-Gly-aminoethanethioate + 2-iminoacetate + 1-deoxy-D-xylulose 5-phosphate = [ThiS sulfur-carrier protein]-C-terminal Gly-Gly + 2-[(2R,5Z)-2-carboxy-4-methylthiazol-5(2H)-ylidene]ethyl phosphate + 2 H2O + H(+). It functions in the pathway cofactor biosynthesis; thiamine diphosphate biosynthesis. Functionally, catalyzes the rearrangement of 1-deoxy-D-xylulose 5-phosphate (DXP) to produce the thiazole phosphate moiety of thiamine. Sulfur is provided by the thiocarboxylate moiety of the carrier protein ThiS. In vitro, sulfur can be provided by H(2)S. In Photobacterium profundum (strain SS9), this protein is Thiazole synthase.